The primary structure comprises 248 residues: Probable phosphatase VS_II0429 (248 aa).

H8, H10, H16, H41, E74, H102, H132, D194, and H196 together coordinate Zn(2+).

Belongs to the PHP family. Zn(2+) serves as cofactor.

The chain is Probable phosphatase VS_II0429 from Vibrio atlanticus (strain LGP32) (Vibrio splendidus (strain Mel32)).